We begin with the raw amino-acid sequence, 82 residues long: Small ribosomal subunit protein bS16 (82 aa).

The protein belongs to the bacterial ribosomal protein bS16 family.

The polypeptide is Small ribosomal subunit protein bS16 (Marinomonas sp. (strain MWYL1)).